The chain runs to 191 residues: MVPMNNWRAVPKLTQCVRTLLQGGVIAYPTEAVWGLGCDPDNDHAVEKILRLKKRPVHKGLILVAASIEQLDFLLHDLEPEYYQKLEASWPGANTWLIPHKGRVSPMVTGKHATVAVRVSNHPIVKALCEGFGGPIVSTSANPMGLSAAKSQMQVRRYFAKEALSYATGVVGGRSTPSVIRDLYTDAIIRA.

The YrdC-like domain maps to 10 to 191; that stretch reads VPKLTQCVRT…DLYTDAIIRA (182 aa).

It belongs to the SUA5 family. TsaC subfamily.

It localises to the cytoplasm. It catalyses the reaction L-threonine + hydrogencarbonate + ATP = L-threonylcarbamoyladenylate + diphosphate + H2O. Functionally, required for the formation of a threonylcarbamoyl group on adenosine at position 37 (t(6)A37) in tRNAs that read codons beginning with adenine. Catalyzes the conversion of L-threonine, HCO(3)(-)/CO(2) and ATP to give threonylcarbamoyl-AMP (TC-AMP) as the acyladenylate intermediate, with the release of diphosphate. The chain is Threonylcarbamoyl-AMP synthase from Saccharophagus degradans (strain 2-40 / ATCC 43961 / DSM 17024).